The primary structure comprises 186 residues: Ribosome-recycling factor (186 aa).

The protein belongs to the RRF family.

The protein resides in the cytoplasm. Its function is as follows. Responsible for the release of ribosomes from messenger RNA at the termination of protein biosynthesis. May increase the efficiency of translation by recycling ribosomes from one round of translation to another. The polypeptide is Ribosome-recycling factor (Cupriavidus necator (strain ATCC 17699 / DSM 428 / KCTC 22496 / NCIMB 10442 / H16 / Stanier 337) (Ralstonia eutropha)).